Here is a 266-residue protein sequence, read N- to C-terminus: MPIGDRQNPSVEKKKNLFRLCPFWQRRSTTSSSSTQNPNQNYRSRHGNRNTDISAVSKPPLTMSSVARSLLPARRRLRLDPSSYLYFPYEPGKQVRSAIKLKNTSKSHTAFKFQTTAPKSCYMRPPGGVLAPGESVFATVFKFVEHPENNEKQPLNQKSKVKFKIMSLKVKPGVEYVPELFDEQKDQVAVEQVLRVIFIDADRPSAALEKLKRQLDEAEAAVEARKKPPPETGPRVVGEGLVIDEWKERREKYLARQQVESVDSLS.

The interval 28-57 (STTSSSSTQNPNQNYRSRHGNRNTDISAVS) is disordered. Positions 76–199 (RLRLDPSSYL…VEQVLRVIFI (124 aa)) constitute an MSP domain. A coiled-coil region spans residues 200 to 228 (DADRPSAALEKLKRQLDEAEAAVEARKKP). The span at 219–229 (EAAVEARKKPP) shows a compositional bias: basic and acidic residues. Positions 219–239 (EAAVEARKKPPPETGPRVVGE) are disordered. The residue at position 264 (serine 264) is a Phosphoserine.

Belongs to the VAMP-associated protein (VAP) (TC 9.B.17) family.

Functionally, may play a role in vesicle trafficking. This chain is Vesicle-associated protein 4-1 (PVA41), found in Arabidopsis thaliana (Mouse-ear cress).